A 217-amino-acid chain; its full sequence is Transcriptional regulatory protein CutR (217 aa).

One can recognise a Response regulatory domain in the interval 2-116 (RVLVVEDEQL…ELIARVRALG (115 aa)). Position 51 is a 4-aspartylphosphate (D51). The segment at residues 124–217 (PPVLERAGIK…VTVPGSGYRI (94 aa)) is a DNA-binding region (ompR/PhoB-type).

Member of the two-component regulatory system CutS/CutR, involved in the regulation of copper metabolism. CutR suppresses a defective melC1 gene, encoding a putative copper-transfer gene, probably by altering copper metabolism. This is Transcriptional regulatory protein CutR (cutR) from Streptomyces lividans.